Consider the following 190-residue polypeptide: Dynein axonemal light chain 1 (190 aa).

Position 2 is an N-acetylalanine (Ala-2). LRR repeat units lie at residues Asn-49–Lys-70, Asn-71–Gly-92, Thr-94–Lys-115, and Lys-116–Ala-137. Ser-56 is modified (phosphoserine). In terms of domain architecture, LRRCT spans Asn-150–Ser-190.

The protein belongs to the dynein light chain LC1-type family. Interacts with ZMYND10 (via C-terminus). Interacts with DNAH5, a outer arm dynein heavy chain. Interacts with tubulin located within the A-tubule of the outer doublets in a ATP-independent manner. As to expression, expressed in the respiratory epithelium of the upper airways and the ependymal cells lining the brain ventricles.

It is found in the cytoplasm. Its subcellular location is the cytoskeleton. The protein localises to the cilium axoneme. Its function is as follows. Part of the multisubunit axonemal ATPase complexes that generate the force for cilia motility and govern beat frequency. Component of the outer arm dynein (ODA). May be involved in a mechanosensory feedback mechanism controlling ODA activity based on external conformational cues by tethering the outer arm dynein heavy chain (DNAH5) to the microtubule within the axoneme. Important for ciliary function in the airways and for the function of the cilia that produce the nodal flow essential for the determination of the left-right asymmetry. This Mus musculus (Mouse) protein is Dynein axonemal light chain 1 (Dnal1).